The following is a 443-amino-acid chain: UDP-N-acetylmuramate--L-alanine ligase (443 aa).

110–116 provides a ligand contact to ATP; that stretch reads GAHGKTS.

This sequence belongs to the MurCDEF family.

Its subcellular location is the cytoplasm. The enzyme catalyses UDP-N-acetyl-alpha-D-muramate + L-alanine + ATP = UDP-N-acetyl-alpha-D-muramoyl-L-alanine + ADP + phosphate + H(+). It functions in the pathway cell wall biogenesis; peptidoglycan biosynthesis. Functionally, cell wall formation. This chain is UDP-N-acetylmuramate--L-alanine ligase, found in Streptococcus suis (strain 98HAH33).